The primary structure comprises 72 residues: UPF0154 protein BH2350 (72 aa).

The helical transmembrane segment at 3-23 (WMILLWITLGIVIGIAIGFFI) threads the bilayer.

The protein belongs to the UPF0154 family.

It is found in the membrane. In Halalkalibacterium halodurans (strain ATCC BAA-125 / DSM 18197 / FERM 7344 / JCM 9153 / C-125) (Bacillus halodurans), this protein is UPF0154 protein BH2350.